The chain runs to 85 residues: Large ribosomal subunit protein bL31B (85 aa).

This sequence belongs to the bacterial ribosomal protein bL31 family. Type B subfamily. In terms of assembly, part of the 50S ribosomal subunit.

In Kocuria rhizophila (strain ATCC 9341 / DSM 348 / NBRC 103217 / DC2201), this protein is Large ribosomal subunit protein bL31B.